A 757-amino-acid chain; its full sequence is Polyribonucleotide nucleotidyltransferase (757 aa).

Residues Asp482 and Asp488 each coordinate Mg(2+). Positions 549-608 (PRMLSFYIDKDKISAAIGSKGKNIRSVCERSNAKIEIGDDGKVSVFATSGTEAEIAKSMM) constitute a KH domain. The region spanning 618 to 686 (GSIVDVKVVR…KGGCPKLSRR (69 aa)) is the S1 motif domain. Over residues 703 to 714 (EERKDGPNDRDN) the composition is skewed to basic and acidic residues. The disordered stretch occupies residues 703-757 (EERKDGPNDRDNYYNNSFSRKPGGSHHKRPPRPRSGFSNRNRPKFGNNDSSSGFY). Residues 725–734 (GGSHHKRPPR) show a composition bias toward basic residues.

It belongs to the polyribonucleotide nucleotidyltransferase family. Requires Mg(2+) as cofactor.

It localises to the cytoplasm. The catalysed reaction is RNA(n+1) + phosphate = RNA(n) + a ribonucleoside 5'-diphosphate. Its function is as follows. Involved in mRNA degradation. Catalyzes the phosphorolysis of single-stranded polyribonucleotides processively in the 3'- to 5'-direction. The chain is Polyribonucleotide nucleotidyltransferase from Wolbachia sp. subsp. Drosophila simulans (strain wRi).